Reading from the N-terminus, the 515-residue chain is Heavy metal-associated isoprenylated plant protein 41 (515 aa).

Residues 376–444 (KQRIVLKMDM…KVCMTTIITV (69 aa)) form the HMA domain. Cysteine methyl ester is present on cysteine 512. Residue cysteine 512 is the site of S-farnesyl cysteine attachment. Residues 513 to 515 (RIL) constitute a propeptide, removed in mature form.

The protein belongs to the HIPP family.

Functionally, heavy-metal-binding protein. The sequence is that of Heavy metal-associated isoprenylated plant protein 41 from Arabidopsis thaliana (Mouse-ear cress).